Here is a 301-residue protein sequence, read N- to C-terminus: Probable alpha-L-glutamate ligase (301 aa).

The ATP-grasp domain maps to 104–287 (LQLLSRKGIG…VAGMIFDFIE (184 aa)). ATP is bound by residues Lys-141, 178–179 (EF), Asp-187, and 211–213 (RSN). The Mg(2+) site is built by Asp-248, Glu-260, and Asn-262. Mn(2+)-binding residues include Asp-248, Glu-260, and Asn-262.

This sequence belongs to the RimK family. Mg(2+) is required as a cofactor. Requires Mn(2+) as cofactor.

The polypeptide is Probable alpha-L-glutamate ligase (Vibrio parahaemolyticus serotype O3:K6 (strain RIMD 2210633)).